The sequence spans 520 residues: Cytochrome P450 4F2 (520 aa).

The propeptide occupies 1–4 (MSQL). Residues glutamate 328 and cysteine 468 each contribute to the heme site.

This sequence belongs to the cytochrome P450 family. Requires heme as cofactor. Liver. Also present in kidney: specifically expressed in the S2 and S3 segments of proximal tubules in cortex and outer medulla.

The protein resides in the microsome membrane. The protein localises to the endoplasmic reticulum membrane. It catalyses the reaction an organic molecule + reduced [NADPH--hemoprotein reductase] + O2 = an alcohol + oxidized [NADPH--hemoprotein reductase] + H2O + H(+). It carries out the reaction (5Z,8Z,11Z,14Z)-eicosatetraenoate + reduced [NADPH--hemoprotein reductase] + O2 = 20-hydroxy-(5Z,8Z,11Z,14Z)-eicosatetraenoate + oxidized [NADPH--hemoprotein reductase] + H2O + H(+). The enzyme catalyses (5Z,8Z,11Z)-eicosatrienoate + reduced [NADPH--hemoprotein reductase] + O2 = 20-hydroxy-(5Z,8Z,11Z)-eicosatrienoate + oxidized [NADPH--hemoprotein reductase] + H2O + H(+). The catalysed reaction is (5Z,8Z,11Z,14Z,17Z)-eicosapentaenoate + reduced [NADPH--hemoprotein reductase] + O2 = 20-hydroxy-(5Z,8Z,11Z,14Z,17Z)-eicosapentaenoate + oxidized [NADPH--hemoprotein reductase] + H2O + H(+). It catalyses the reaction (4Z,7Z,10Z,13Z,16Z,19Z)-docosahexaenoate + reduced [NADPH--hemoprotein reductase] + O2 = 22-hydroxy-(4Z,7Z,10Z,13Z,16Z,19Z)-docosahexaenoate + oxidized [NADPH--hemoprotein reductase] + H2O + H(+). It carries out the reaction 8,9-epoxy-(5Z,11Z,14Z)-eicosatrienoate + reduced [NADPH--hemoprotein reductase] + O2 = 20-hydroxy-8,9-epoxy-(5Z,11Z,14Z)-eicosatrienoate + oxidized [NADPH--hemoprotein reductase] + H2O + H(+). The enzyme catalyses (9S,10R)-epoxy-octadecanoate + reduced [NADPH--hemoprotein reductase] + O2 = 18-hydroxy-(9S,10R)-epoxy-octadecanoate + oxidized [NADPH--hemoprotein reductase] + H2O + H(+). The catalysed reaction is (9R,10S)-epoxy-octadecanoate + reduced [NADPH--hemoprotein reductase] + O2 = 18-hydroxy-(9R,10S)-epoxy-octadecanoate + oxidized [NADPH--hemoprotein reductase] + H2O + H(+). It catalyses the reaction 12,13-epoxy-(9Z)-octadecenoate + reduced [NADPH--hemoprotein reductase] + O2 = 18-hydroxy-12,13-epoxy-(9Z)-octadecenoate + oxidized [NADPH--hemoprotein reductase] + H2O + H(+). It carries out the reaction 9,10-epoxy-(12Z)-octadecenoate + reduced [NADPH--hemoprotein reductase] + O2 = 18-hydroxy-9,10-epoxy-(12Z)-octadecenoate + oxidized [NADPH--hemoprotein reductase] + H2O + H(+). The enzyme catalyses 8-hydroxy-(5Z,9E,11Z,14Z)-eicosatetraenoate + reduced [NADPH--hemoprotein reductase] + O2 = 8,20-dihydroxy-(5Z,9E,11Z,14Z)-eicosatetraenoate + oxidized [NADPH--hemoprotein reductase] + H2O + H(+). The catalysed reaction is 12-hydroxy-(5Z,8Z,10E,14Z)-eicosatetraenoate + reduced [NADPH--hemoprotein reductase] + O2 = 12,20-dihydroxy-(5Z,8Z,10E,14Z)-eicosatetraenoate + oxidized [NADPH--hemoprotein reductase] + H2O + H(+). It catalyses the reaction 12-hydroxyoctadecanoate + reduced [NADPH--hemoprotein reductase] + O2 = 12,18-dihydroxyoctadecanoate + oxidized [NADPH--hemoprotein reductase] + H2O + H(+). It carries out the reaction docosanoate + reduced [NADPH--hemoprotein reductase] + O2 = 22-hydroxydocosanoate + oxidized [NADPH--hemoprotein reductase] + H2O + H(+). The enzyme catalyses 22-hydroxydocosanoate + reduced [NADPH--hemoprotein reductase] + O2 = 22-oxodocosanoate + oxidized [NADPH--hemoprotein reductase] + 2 H2O + H(+). The catalysed reaction is 22-oxodocosanoate + reduced [NADPH--hemoprotein reductase] + O2 = docosanedioate + oxidized [NADPH--hemoprotein reductase] + H2O + 2 H(+). It catalyses the reaction tetracosanoate + reduced [NADPH--hemoprotein reductase] + O2 = 24-hydroxytetracosanoate + oxidized [NADPH--hemoprotein reductase] + H2O + H(+). It carries out the reaction hexacosanoate + reduced [NADPH--hemoprotein reductase] + O2 = 26-hydroxyhexacosanoate + oxidized [NADPH--hemoprotein reductase] + H2O + H(+). The enzyme catalyses 26-hydroxyhexacosanoate + reduced [NADPH--hemoprotein reductase] + O2 = 26-oxohexacosanoate + oxidized [NADPH--hemoprotein reductase] + 2 H2O + H(+). The catalysed reaction is 26-oxohexacosanoate + reduced [NADPH--hemoprotein reductase] + O2 = hexacosanedioate + oxidized [NADPH--hemoprotein reductase] + H2O + 2 H(+). It catalyses the reaction 3-hydroxyoctadecanoate + reduced [NADPH--hemoprotein reductase] + O2 = 3,18-dihydroxyoctadecanoate + oxidized [NADPH--hemoprotein reductase] + H2O + H(+). It carries out the reaction 3-hydroxyhexadecanoate + reduced [NADPH--hemoprotein reductase] + O2 = 3,16-dihydroxyhexadecanoate + oxidized [NADPH--hemoprotein reductase] + H2O + H(+). The enzyme catalyses leukotriene B4 + reduced [NADPH--hemoprotein reductase] + O2 = 20-hydroxy-leukotriene B4 + oxidized [NADPH--hemoprotein reductase] + H2O + H(+). The catalysed reaction is 6-trans-leukotriene B4 + reduced [NADPH--hemoprotein reductase] + O2 = 20-hydroxy-6-trans-leukotriene B4 + oxidized [NADPH--hemoprotein reductase] + H2O + H(+). It catalyses the reaction lipoxin A4 + reduced [NADPH--hemoprotein reductase] + O2 = 20-hydroxy-lipoxin A4 + oxidized [NADPH--hemoprotein reductase] + H2O + H(+). It carries out the reaction menaquinone-4 + reduced [NADPH--hemoprotein reductase] + O2 = omega-hydroxymenaquinone-4 + oxidized [NADPH--hemoprotein reductase] + H2O + H(+). The enzyme catalyses phylloquinone + reduced [NADPH--hemoprotein reductase] + O2 = omega-hydroxyphylloquinone + oxidized [NADPH--hemoprotein reductase] + H2O + H(+). The catalysed reaction is (+)-alpha-tocopherol + reduced [NADPH--hemoprotein reductase] + O2 = 13-hydroxy-alpha-tocopherol + oxidized [NADPH--hemoprotein reductase] + H2O + H(+). It catalyses the reaction gamma-tocopherol + NADPH + O2 + H(+) = 13-hydroxy-gamma-tocopherol + NADP(+) + H2O. Its pathway is lipid metabolism; arachidonate metabolism. It participates in lipid metabolism; leukotriene B4 degradation. The protein operates within cofactor degradation; phylloquinone degradation. With respect to regulation, inhibited by dietary sesamin. Its function is as follows. A cytochrome P450 monooxygenase involved in the metabolism of various endogenous substrates, including fatty acids, eicosanoids and vitamins. Mechanistically, uses molecular oxygen inserting one oxygen atom into a substrate, and reducing the second into a water molecule, with two electrons provided by NADPH via cytochrome P450 reductase (CPR; NADPH-ferrihemoprotein reductase). Catalyzes predominantly the oxidation of the terminal carbon (omega-oxidation) of long- and very long-chain fatty acids. Displays high omega-hydroxylase activity toward polyunsaturated fatty acids (PUFAs). Participates in the conversion of arachidonic acid to omega-hydroxyeicosatetraenoic acid (20-HETE), a signaling molecule acting both as vasoconstrictive and natriuretic with overall effect on arterial blood pressure. Plays a role in the oxidative inactivation of eicosanoids, including both pro-inflammatory and anti-inflammatory mediators such as leukotriene B4 (LTB4), lipoxin A4 (LXA4), and several HETEs. Catalyzes omega-hydroxylation of 3-hydroxy fatty acids. Converts monoepoxides of linoleic acid leukotoxin and isoleukotoxin to omega-hydroxylated metabolites. Contributes to the degradation of very long-chain fatty acids (VLCFAs) by catalyzing successive omega-oxidations and chain shortening. Plays an important role in vitamin metabolism by chain shortening. Catalyzes omega-hydroxylation of the phytyl chain of tocopherols (forms of vitamin E), with preference for gamma-tocopherols over alpha-tocopherols, thus promoting retention of alpha-tocopherols in tissues. Omega-hydroxylates and inactivates phylloquinone (vitamin K1), and menaquinone-4 (MK-4, a form of vitamin K2), both acting as cofactors in blood coagulation. This is Cytochrome P450 4F2 from Homo sapiens (Human).